Here is a 375-residue protein sequence, read N- to C-terminus: Lipid-A-disaccharide synthase (375 aa).

It belongs to the LpxB family.

It carries out the reaction a lipid X + a UDP-2-N,3-O-bis[(3R)-3-hydroxyacyl]-alpha-D-glucosamine = a lipid A disaccharide + UDP + H(+). Its pathway is bacterial outer membrane biogenesis; LPS lipid A biosynthesis. In terms of biological role, condensation of UDP-2,3-diacylglucosamine and 2,3-diacylglucosamine-1-phosphate to form lipid A disaccharide, a precursor of lipid A, a phosphorylated glycolipid that anchors the lipopolysaccharide to the outer membrane of the cell. This is Lipid-A-disaccharide synthase from Pseudomonas putida (strain ATCC 47054 / DSM 6125 / CFBP 8728 / NCIMB 11950 / KT2440).